Reading from the N-terminus, the 834-residue chain is MFNKDEIIVPKNLEEEMKESYLRYSMSVIISRALPDIRDGLKPSQRRVLYAMKQLSLSPGAKHRKCAKICGDTSGDYHPHGESVIYPTLVRMAQNWAMRYPLVDGQGNFGSIDGDPPAAMRYTEARLTHSAMYLMEDLDKDTVDIVPNYDETKHEPVVFPSKFPNLLCNGSSGIAVGMATNIPPHNLGELIEATLLLLANPQASVDEILQVMPGPDFPTGGIICGSEGIRSTYTTGRGKIKVRARLHVEENEDKHRESIIITEMPYNVNKSRLIEQIANLVNEKTLAGISDVRDESDKDGIRVVLEIKKGESSEIIINRLYKFTDVQVTFGANMLALDKNLPRTMSIHRMISAWIRHRKEVIRRRTRYELNKAETRAHVLEGYLKALSCLDALVKTIRESGNKEHAKERIIESFGFTEPQALAILELRLYQLTGLEAEKIQKEYEELLNKIAYYKQVLSDEGLVKDIIRNELQDLLKHHKVARRTTIEFDADDIRDIEDIITNESVIITISGDDYVKRMPVKVFKEQRRGGHGVTGFDMKKGAGFLKAVYSAFTKDYLLIFTNFGQCYWLKVWQLPEGERRAKGKPIINFLEGIRPGEELAAILNIKNFDNAGFLFLATKRGVVKKVSLDAFSNPRKKGIRALEIDEGDELIAACHIVSDEEKVMLFTHLGMAVRFPHEKVRPMGRTARGVRGVSLKNEEDKVVSCQIVTENQSVLIVCDQGFGKRSLVEDFRETNRGGVGVRSILINERNGNVLGAIPVTDHDSILLMSSQGQAIRINMQDVRVMGRSTQGVRLVHLKEGDALVSMEKLSSNENDDEVLSGSEEECSDTVSLR.

The Topo IIA-type catalytic domain maps to 34 to 500; it reads LPDIRDGLKP…ADDIRDIEDI (467 aa). Tyr122 functions as the O-(5'-phospho-DNA)-tyrosine intermediate in the catalytic mechanism. The GyrA-box signature appears at 527–533; it reads QRRGGHG. Residues 810–834 form a disordered region; that stretch reads LSSNENDDEVLSGSEEECSDTVSLR. The segment covering 814-828 has biased composition (acidic residues); it reads ENDDEVLSGSEEECS.

It belongs to the type II topoisomerase GyrA/ParC subunit family. As to quaternary structure, heterotetramer, composed of two GyrA and two GyrB chains. In the heterotetramer, GyrA contains the active site tyrosine that forms a transient covalent intermediate with DNA, while GyrB binds cofactors and catalyzes ATP hydrolysis.

It localises to the cytoplasm. It catalyses the reaction ATP-dependent breakage, passage and rejoining of double-stranded DNA.. A type II topoisomerase that negatively supercoils closed circular double-stranded (ds) DNA in an ATP-dependent manner to modulate DNA topology and maintain chromosomes in an underwound state. Negative supercoiling favors strand separation, and DNA replication, transcription, recombination and repair, all of which involve strand separation. Also able to catalyze the interconversion of other topological isomers of dsDNA rings, including catenanes and knotted rings. Type II topoisomerases break and join 2 DNA strands simultaneously in an ATP-dependent manner. This is DNA gyrase subunit A from Chlamydia pneumoniae (Chlamydophila pneumoniae).